The primary structure comprises 906 residues: Translation initiation factor IF-2 (906 aa).

2 disordered regions span residues R134 to V250 and H269 to P317. Residues R136–E177 are compositionally biased toward basic and acidic residues. 2 stretches are compositionally biased toward low complexity: residues E178–A232 and G287–N305. The region spanning T405–K574 is the tr-type G domain. The interval G414–T421 is G1. G414–T421 contacts GTP. Residues G439–H443 are G2. The G3 stretch occupies residues D460–G463. GTP is bound by residues D460–H464 and N514–D517. Positions N514 to D517 are G4. The tract at residues S550 to K552 is G5.

Belongs to the TRAFAC class translation factor GTPase superfamily. Classic translation factor GTPase family. IF-2 subfamily.

The protein localises to the cytoplasm. Its function is as follows. One of the essential components for the initiation of protein synthesis. Protects formylmethionyl-tRNA from spontaneous hydrolysis and promotes its binding to the 30S ribosomal subunits. Also involved in the hydrolysis of GTP during the formation of the 70S ribosomal complex. The polypeptide is Translation initiation factor IF-2 (Xanthomonas oryzae pv. oryzae (strain MAFF 311018)).